Reading from the N-terminus, the 156-residue chain is Large ribosomal subunit protein uL15 (156 aa).

The segment at 1–44 (MKLNELRDNPGASPKRTRVGRGPGSGKGKMGGRGIKGQKSRSGV) is disordered. Over residues 21 to 35 (RGPGSGKGKMGGRGI) the composition is skewed to gly residues.

It belongs to the universal ribosomal protein uL15 family. Part of the 50S ribosomal subunit.

Functionally, binds to the 23S rRNA. The sequence is that of Large ribosomal subunit protein uL15 from Ruegeria sp. (strain TM1040) (Silicibacter sp.).